Reading from the N-terminus, the 141-residue chain is Hemoglobin subunit alpha (141 aa).

Positions 1 to 141 (VLSSDDKCNV…VSSVLTSKYR (141 aa)) constitute a Globin domain. His58 serves as a coordination point for O2. A heme b-binding site is contributed by His87.

This sequence belongs to the globin family. In terms of assembly, heterotetramer of two alpha chains and two beta chains. Red blood cells.

Its function is as follows. Involved in oxygen transport from the lung to the various peripheral tissues. The chain is Hemoglobin subunit alpha (HBA) from Crocodylus niloticus (Nile crocodile).